The primary structure comprises 333 residues: Eukaryotic translation initiation factor 3 subunit I (333 aa).

WD repeat units lie at residues 8-47 (GHERSITQIKYNREGDLLFTVAKDPIVNVWYSVNGERLGT), 50-91 (GHTG…ALLK), 144-183 (CNDSKITSAVWGPLGECIIAGHESGELNQYSAKSGEVLVN), and 186-225 (EHSRQINDIQLSREMTMFVTASKDNTAKLFDSTTLEHQKT). At Thr-219 the chain carries Phosphothreonine. Lys-264 is subject to N6-acetyllysine. Lys-282 is covalently cross-linked (Glycyl lysine isopeptide (Lys-Gly) (interchain with G-Cter in ubiquitin)). Residues 283–324 (GHFGPINSVAFHPDGKSYSSGGEDGYVRIHYFDPQYFEFEFE) form a WD 5 repeat. Tyr-308 carries the post-translational modification Phosphotyrosine.

This sequence belongs to the eIF-3 subunit I family. In terms of assembly, component of the eukaryotic translation initiation factor 3 (eIF-3) complex, which is composed of 13 subunits: EIF3A, EIF3B, EIF3C, EIF3D, EIF3E, EIF3F, EIF3G, EIF3H, EIF3I, EIF3J, EIF3K, EIF3L and EIF3M. The eIF-3 complex appears to include 3 stable modules: module A is composed of EIF3A, EIF3B, EIF3G and EIF3I; module B is composed of EIF3F, EIF3H, and EIF3M; and module C is composed of EIF3C, EIF3D, EIF3E, EIF3K and EIF3L. EIF3C of module C binds EIF3B of module A and EIF3H of module B, thereby linking the three modules. EIF3J is a labile subunit that binds to the eIF-3 complex via EIF3B. The eIF-3 complex interacts with RPS6KB1 under conditions of nutrient depletion. Mitogenic stimulation leads to binding and activation of a complex composed of MTOR and RPTOR, leading to phosphorylation and release of RPS6KB1 and binding of EIF4B to eIF-3. Phosphorylated by TGF-beta type II receptor.

The protein resides in the cytoplasm. In terms of biological role, component of the eukaryotic translation initiation factor 3 (eIF-3) complex, which is required for several steps in the initiation of protein synthesis. The eIF-3 complex associates with the 40S ribosome and facilitates the recruitment of eIF-1, eIF-1A, eIF-2:GTP:methionyl-tRNAi and eIF-5 to form the 43S pre-initiation complex (43S PIC). The eIF-3 complex stimulates mRNA recruitment to the 43S PIC and scanning of the mRNA for AUG recognition. The eIF-3 complex is also required for disassembly and recycling of post-termination ribosomal complexes and subsequently prevents premature joining of the 40S and 60S ribosomal subunits prior to initiation. The eIF-3 complex specifically targets and initiates translation of a subset of mRNAs involved in cell proliferation, including cell cycling, differentiation and apoptosis, and uses different modes of RNA stem-loop binding to exert either translational activation or repression. The sequence is that of Eukaryotic translation initiation factor 3 subunit I from Oryctolagus cuniculus (Rabbit).